Consider the following 152-residue polypeptide: Transcriptional regulator MraZ (152 aa).

SpoVT-AbrB domains follow at residues 5-52 (ASAI…PLHE) and 81-124 (AHEV…DEQA).

This sequence belongs to the MraZ family. In terms of assembly, forms oligomers.

Its subcellular location is the cytoplasm. The protein resides in the nucleoid. This is Transcriptional regulator MraZ from Shewanella sp. (strain MR-7).